We begin with the raw amino-acid sequence, 406 residues long: Cyclin-dependent kinase 4 homolog (406 aa).

A Protein kinase domain is found at 102 to 388 (TFLFQALGKG…ARGALSHPFL (287 aa)). ATP-binding positions include 108–116 (LGKGAYGNV) and lysine 131. Residue aspartate 233 is the Proton acceptor of the active site. Mg(2+) contacts are provided by asparagine 238 and aspartate 251.

This sequence belongs to the protein kinase superfamily. CMGC Ser/Thr protein kinase family. CDC2/CDKX subfamily. As to quaternary structure, interacts with cyd-1; the interaction is likely involved in regulating cdk-4 activity. Mg(2+) serves as cofactor.

The enzyme catalyses L-seryl-[protein] + ATP = O-phospho-L-seryl-[protein] + ADP + H(+). It catalyses the reaction L-threonyl-[protein] + ATP = O-phospho-L-threonyl-[protein] + ADP + H(+). Its function is as follows. Serine/threonine-protein kinase which, in association with cyclin D-like protein cyd-1, is required for the progression through the G1 phase of the cell cycle during postembryonic development by phosphorylating and inhibiting lin-35 and fzr-1. In complex with cyd-1, involved in sex determination during gonadogenesis by regulating the asymmetric division of the somatic gonadal precursor cell (SGP). This is Cyclin-dependent kinase 4 homolog from Caenorhabditis elegans.